A 450-amino-acid chain; its full sequence is 23S rRNA (uracil(1939)-C(5))-methyltransferase RlmD (450 aa).

In terms of domain architecture, TRAM spans 12–70 (SKQLSAKLSLSVNQLDHLGAGIAQHQGKVVFIPGALPDETVTVQFTEQKKNYARAKLIK). Positions 83, 89, 92, and 171 each coordinate [4Fe-4S] cluster. S-adenosyl-L-methionine is bound by residues Gln283, Phe312, Asn317, Glu333, Asp360, and Asp380. Cys406 serves as the catalytic Nucleophile.

The protein belongs to the class I-like SAM-binding methyltransferase superfamily. RNA M5U methyltransferase family. RlmD subfamily.

The enzyme catalyses uridine(1939) in 23S rRNA + S-adenosyl-L-methionine = 5-methyluridine(1939) in 23S rRNA + S-adenosyl-L-homocysteine + H(+). In terms of biological role, catalyzes the formation of 5-methyl-uridine at position 1939 (m5U1939) in 23S rRNA. This Shewanella baltica (strain OS155 / ATCC BAA-1091) protein is 23S rRNA (uracil(1939)-C(5))-methyltransferase RlmD.